The following is a 103-amino-acid chain: uncharacterized protein (103 aa).

Residues 1–10 show a composition bias toward basic residues; sequence MVVKKSKPKN. Disordered stretches follow at residues 1 to 38 and 77 to 103; these read MVVK…KGKK and AVFS…NEKK.

This is an uncharacterized protein from Schizosaccharomyces pombe (strain 972 / ATCC 24843) (Fission yeast).